The chain runs to 309 residues: NAD kinase (309 aa).

Catalysis depends on D89, which acts as the Proton acceptor. NAD(+) is bound by residues 89–90 (DG), 163–164 (NE), H174, R191, D193, and 204–209 (TAYALS).

Belongs to the NAD kinase family. Requires a divalent metal cation as cofactor.

Its subcellular location is the cytoplasm. It catalyses the reaction NAD(+) + ATP = ADP + NADP(+) + H(+). Its function is as follows. Involved in the regulation of the intracellular balance of NAD and NADP, and is a key enzyme in the biosynthesis of NADP. Catalyzes specifically the phosphorylation on 2'-hydroxyl of the adenosine moiety of NAD to yield NADP. This Shewanella baltica (strain OS185) protein is NAD kinase.